The sequence spans 353 residues: Thiamine-phosphate synthase (353 aa).

The unknown stretch occupies residues 1–128; the sequence is MESMPVAPST…ARTAAAVRYA (128 aa). The thiamine-phosphate synthase stretch occupies residues 129 to 353; that stretch reads LYDHEVRILE…ASRQLLDLLT (225 aa). 4-amino-2-methyl-5-(diphosphooxymethyl)pyrimidine-binding positions include 185 to 189 and Asn217; that span reads QYRRK. Asp218 and Asp237 together coordinate Mg(2+). Ser256 is a 4-amino-2-methyl-5-(diphosphooxymethyl)pyrimidine binding site. 282 to 284 lines the 2-[(2R,5Z)-2-carboxy-4-methylthiazol-5(2H)-ylidene]ethyl phosphate pocket; sequence TAT. 4-amino-2-methyl-5-(diphosphooxymethyl)pyrimidine is bound at residue Lys285. Residues Gly312 and 332 to 333 contribute to the 2-[(2R,5Z)-2-carboxy-4-methylthiazol-5(2H)-ylidene]ethyl phosphate site; that span reads VS.

Belongs to the thiamine-phosphate synthase family. The cofactor is Mg(2+).

The catalysed reaction is 2-[(2R,5Z)-2-carboxy-4-methylthiazol-5(2H)-ylidene]ethyl phosphate + 4-amino-2-methyl-5-(diphosphooxymethyl)pyrimidine + 2 H(+) = thiamine phosphate + CO2 + diphosphate. The enzyme catalyses 2-(2-carboxy-4-methylthiazol-5-yl)ethyl phosphate + 4-amino-2-methyl-5-(diphosphooxymethyl)pyrimidine + 2 H(+) = thiamine phosphate + CO2 + diphosphate. It carries out the reaction 4-methyl-5-(2-phosphooxyethyl)-thiazole + 4-amino-2-methyl-5-(diphosphooxymethyl)pyrimidine + H(+) = thiamine phosphate + diphosphate. It participates in cofactor biosynthesis; thiamine diphosphate biosynthesis; thiamine phosphate from 4-amino-2-methyl-5-diphosphomethylpyrimidine and 4-methyl-5-(2-phosphoethyl)-thiazole: step 1/1. Condenses 4-methyl-5-(beta-hydroxyethyl)thiazole monophosphate (THZ-P) and 2-methyl-4-amino-5-hydroxymethyl pyrimidine pyrophosphate (HMP-PP) to form thiamine monophosphate (TMP). The chain is Thiamine-phosphate synthase from Synechococcus sp. (strain WH7803).